The following is a 592-amino-acid chain: Aspartate--tRNA ligase (592 aa).

Glu173 is an L-aspartate binding site. Residues Gln197–Lys200 form an aspartate region. Arg219 serves as a coordination point for L-aspartate. Residues Arg219–Glu221 and Gln228 contribute to the ATP site. His448 lines the L-aspartate pocket. ATP is bound at residue Glu482. Arg489 provides a ligand contact to L-aspartate. Position 534–537 (Gly534–Arg537) interacts with ATP.

Belongs to the class-II aminoacyl-tRNA synthetase family. Type 1 subfamily. As to quaternary structure, homodimer.

It localises to the cytoplasm. It carries out the reaction tRNA(Asp) + L-aspartate + ATP = L-aspartyl-tRNA(Asp) + AMP + diphosphate. Functionally, catalyzes the attachment of L-aspartate to tRNA(Asp) in a two-step reaction: L-aspartate is first activated by ATP to form Asp-AMP and then transferred to the acceptor end of tRNA(Asp). This chain is Aspartate--tRNA ligase, found in Shewanella baltica (strain OS223).